A 79-amino-acid polypeptide reads, in one-letter code: Small ribosomal subunit protein bS18 (79 aa).

This sequence belongs to the bacterial ribosomal protein bS18 family. In terms of assembly, part of the 30S ribosomal subunit. Forms a tight heterodimer with protein bS6.

Its function is as follows. Binds as a heterodimer with protein bS6 to the central domain of the 16S rRNA, where it helps stabilize the platform of the 30S subunit. This is Small ribosomal subunit protein bS18 from Streptococcus pneumoniae (strain Hungary19A-6).